Here is a 1158-residue protein sequence, read N- to C-terminus: MTDVSAPTGGATSPVDITASPGSTALPPVATTSAAASASSSQAKPLTNGAKKAATAAAAAGAEEGGASASNQVKQEQRRQSNNNRPAASGTPEAKQATPAGNPDPGAGSTSKSSSIHTQTSQQERAGRPTSSASQHDVDEVARLFEEKPEAFEKWLTERAPPEALGRLQEFIESRKPLKRPSVTSDLFQQWMAASPTVQQKSPRSLSNSSASSIPESRRHLMDLDEGELFMELIRDVANELDIDVLCHKILVNVGLLTHADRGSLFLAKGAPNNKYLVAKLFDVTQKTALKDAVTRASTEEIIIPFGIGIAGMVAQTKQMINIKEAYKDARFNCEIDLKTGYKTNAILCMPICNYEGDIIGVAQIINKTNGCMEFDEHDVEIFRRYLTFCGIGIQNAQLFEMSVQEYRRNQILLNLARSIFEEQNNLECLVTKIMTEARELLKCERCSVFLVDLDCCEAGCGRVGGAMRRFGVRSKQVSAIVEHVGGRRGNTSHLEKIIEKPNQPATRAIKSADSFEEKKMRNRFTVLFELGGEYQAANVSRPSTSELSTSTLAQIAQFVATTGQTVNICDVHEWVREHNQIRAESEIDSTQAILCMPIVNAKKTVIGVAQLINKANGVPFTESDASIFEAFAIFCGLGIHNTQMYENACKLMAKQKVALECLSYHATASQDQTEKLTQDAIADADTYNLYSFTFTDFELVDDDTCRAVLRMFMQCNLVSQFQIPYDVLCRWVLSVRKNYRPVKYHNWRHALNVAQTMFAMLKTGKMERFMTDLEILGLLVACLCHDLDHRGTNNAFQTKTESPLAILYTTSTMEHHHFDQCVMILNSEGNNIFQALSPEDYRSVMKTVESAILSTDLAMYFKKRNAFLELVENGEFDWQGEEKKDLLCGMMMTACDVSAIAKPWEVQHKVAKLVADEFFDQGDLEKLQLNTQPVAMMDRERKDELPKMQVGFIDVICLPLYRVLCDTFPWITPLYEGTLENRRNWQDLAEKVEMGLTWIDHDTIDKPVEEFAACADEEIKDIEFTVTTLNCNQSQQSQHGSEDSHTPEHQRSGSRLSMKKTGALGKAVRSKLSKTLYNSMDGSKPKTSLKLLESHVSEDMDDKSPTSPSQPQAAGSMGRMSASSSTSSAGGQGQCQVAAPGQAQDKSKKRSKLCALL.

Disordered stretches follow at residues 1-137 and 195-216; these read MTDV…SQHD and SPTV…SIPE. Residues 30-71 are compositionally biased toward low complexity; the sequence is ATTSAAASASSSQAKPLTNGAKKAATAAAAAGAEEGGASASN. Residues 108–135 show a composition bias toward polar residues; that stretch reads GSTSKSSSIHTQTSQQERAGRPTSSASQ. The segment covering 202-215 has biased composition (low complexity); that stretch reads SPRSLSNSSASSIP. 2 GAF domains span residues 242 to 394 and 426 to 640; these read DIDV…GIGI and NLEC…GLGI. One can recognise a PDEase domain in the interval 670 to 993; sequence SQDQTEKLTQ…RNWQDLAEKV (324 aa). The active-site Proton donor is the His746. 4 residues coordinate a divalent metal cation: His750, His786, Asp787, and Asp897. Disordered stretches follow at residues 1034-1065 and 1097-1158; these read QSQQ…TGAL and VSED…CALL. Over residues 1041 to 1052 the composition is skewed to basic and acidic residues; it reads GSEDSHTPEHQR. A compositionally biased stretch (low complexity) spans 1114–1130; the sequence is AAGSMGRMSASSSTSSA. A compositionally biased stretch (basic residues) spans 1148–1158; sequence SKKRSKLCALL. The residue at position 1155 (Cys1155) is a Cysteine methyl ester. Cys1155 carries S-farnesyl cysteine lipidation. Residues 1156 to 1158 constitute a propeptide, removed in mature form; the sequence is ALL.

Belongs to the cyclic nucleotide phosphodiesterase family. Interacts with PrBP. Requires a divalent metal cation as cofactor.

The protein localises to the cell membrane. It carries out the reaction 3',5'-cyclic GMP + H2O = GMP + H(+). In terms of biological role, has a role regulating cGMP transport in Malpighian tubule principal cells. The sequence is that of cGMP-specific 3',5'-cyclic phosphodiesterase from Drosophila ananassae (Fruit fly).